A 274-amino-acid chain; its full sequence is Copper chaperone for superoxide dismutase (274 aa).

Residues 11 to 74 (VCALEFAVQM…LLESTGRQAV (64 aa)) form the HMA domain. Cu cation is bound by residues cysteine 22 and cysteine 25. A Glycyl lysine isopeptide (Lys-Gly) (interchain with G-Cter in ubiquitin) cross-link involves residue lysine 76. A superoxide dismutase-like region spans residues 88–234 (AAVAILEGCG…LACGIIARSA (147 aa)). A disulfide bridge links cysteine 141 with cysteine 227. Zn(2+) is bound by residues histidine 147, histidine 155, histidine 164, and aspartate 167. Glycyl lysine isopeptide (Lys-Gly) (interchain with G-Cter in ubiquitin) cross-links involve residues lysine 189, lysine 216, and lysine 241. The Cu cation site is built by cysteine 244 and cysteine 246. Serine 267 is subject to Phosphoserine.

This sequence in the C-terminal section; belongs to the Cu-Zn superoxide dismutase family. In terms of assembly, homodimer, and heterodimer with SOD1. Interacts with COMMD1. Interacts with XIAP/BIRC4. Interacts with SLC31A1(via C-terminal domain); this interaction is Cu(1+)-mediated. The heterodimer CCS:SOD1 interacts with SLC31A1; this heterotrimer is Cu(1+)-mediated and its maintenance is regulated through SOD1 activation. The cofactor is Cu(2+). Requires Zn(2+) as cofactor. In terms of processing, ubiquitinion by XIAP/BIRC4 leads to enhancement of its chaperone activity toward its physiologic target, SOD1, rather than proteasomal degradation. XIAP/BIRC4 preferentially ubiquitinates at Lys-241. Ubiquitous.

Its subcellular location is the cytoplasm. Its function is as follows. Delivers copper to copper zinc superoxide dismutase (SOD1). The sequence is that of Copper chaperone for superoxide dismutase from Mus musculus (Mouse).